The sequence spans 307 residues: D-alanine--D-alanine ligase (307 aa).

Residues 101–301 enclose the ATP-grasp domain; sequence KTVMRAAGVS…FGELVRWMVE (201 aa). An ATP-binding site is contributed by 127–182; the sequence is PLTPPYVVKPIAEGSSMGVIIVREERSHPPQILASDEWVYGEEVLAETYIAGRELT. Positions 251, 268, and 270 each coordinate Mg(2+).

The protein belongs to the D-alanine--D-alanine ligase family. It depends on Mg(2+) as a cofactor. Requires Mn(2+) as cofactor.

It localises to the cytoplasm. The enzyme catalyses 2 D-alanine + ATP = D-alanyl-D-alanine + ADP + phosphate + H(+). It participates in cell wall biogenesis; peptidoglycan biosynthesis. Its function is as follows. Cell wall formation. In Methylorubrum populi (strain ATCC BAA-705 / NCIMB 13946 / BJ001) (Methylobacterium populi), this protein is D-alanine--D-alanine ligase.